The sequence spans 396 residues: S-adenosylmethionine synthase (396 aa).

Residue His14 coordinates ATP. Asp16 is a Mg(2+) binding site. Glu42 contributes to the K(+) binding site. L-methionine-binding residues include Glu55 and Gln98. The tract at residues 98–108 (QSPDIALGVNE) is flexible loop. ATP contacts are provided by residues 174–176 (DGK), 241–242 (RF), Asp250, 256–257 (RK), Ala273, and Lys277. An L-methionine-binding site is contributed by Asp250. Residue Lys281 coordinates L-methionine.

The protein belongs to the AdoMet synthase family. As to quaternary structure, homotetramer; dimer of dimers. The cofactor is Mg(2+). K(+) is required as a cofactor.

It is found in the cytoplasm. The catalysed reaction is L-methionine + ATP + H2O = S-adenosyl-L-methionine + phosphate + diphosphate. It functions in the pathway amino-acid biosynthesis; S-adenosyl-L-methionine biosynthesis; S-adenosyl-L-methionine from L-methionine: step 1/1. In terms of biological role, catalyzes the formation of S-adenosylmethionine (AdoMet) from methionine and ATP. The overall synthetic reaction is composed of two sequential steps, AdoMet formation and the subsequent tripolyphosphate hydrolysis which occurs prior to release of AdoMet from the enzyme. The chain is S-adenosylmethionine synthase from Fervidobacterium nodosum (strain ATCC 35602 / DSM 5306 / Rt17-B1).